A 516-amino-acid chain; its full sequence is D-aminopeptidase (516 aa).

The active-site Nucleophile is Ser61. Residue Lys64 is the Proton donor/acceptor of the active site. The tract at residues 476–486 is important for specificity; sequence RRSMDAPAPGD. Asp480 serves as a coordination point for substrate.

The protein belongs to the peptidase S12 family. As to quaternary structure, homodimer.

The enzyme catalyses Release of an N-terminal D-amino acid from a peptide, Xaa-|-Yaa-, in which Xaa is preferably D-Ala, D-Ser or D-Thr. D-amino acid amides and methyl esters also are hydrolyzed, as is glycine amide.. With respect to regulation, inhibited by beta-lactam compounds such as 6-aminopenicillic acid, 7-aminocephalosporanic acid, benzylpenicillin and ampicillin. Inhibited by p-chloromercuribenzoate. In terms of biological role, hydrolyzes N-terminal residues in D-amino acid-containing peptides. The protein is D-aminopeptidase of Cereibacter sphaeroides (strain KD131 / KCTC 12085) (Rhodobacter sphaeroides).